The sequence spans 269 residues: Energy-coupling factor transporter ATP-binding protein EcfA1 (269 aa).

The 235-residue stretch at 8–242 (IVFKNVSFQY…AEELTRIGLD (235 aa)) folds into the ABC transporter domain. 42–49 (GHNGSGKS) contributes to the ATP binding site.

Belongs to the ABC transporter superfamily. Energy-coupling factor EcfA family. As to quaternary structure, forms a stable energy-coupling factor (ECF) transporter complex composed of 2 membrane-embedded substrate-binding proteins (S component), 2 ATP-binding proteins (A component) and 2 transmembrane proteins (T component).

Its subcellular location is the cell membrane. ATP-binding (A) component of a common energy-coupling factor (ECF) ABC-transporter complex. Unlike classic ABC transporters this ECF transporter provides the energy necessary to transport a number of different substrates. In Staphylococcus aureus (strain Mu50 / ATCC 700699), this protein is Energy-coupling factor transporter ATP-binding protein EcfA1.